Reading from the N-terminus, the 110-residue chain is PCNA-associated factor (110 aa).

Lys-15 participates in a covalent cross-link: Glycyl lysine isopeptide (Lys-Gly) (interchain with G-Cter in ubiquitin). The D-box motif lies at 23–34; sequence RKVLGSSTFVTN. Position 24 is an N6-acetyllysine; alternate (Lys-24). A Glycyl lysine isopeptide (Lys-Gly) (interchain with G-Cter in ubiquitin); alternate cross-link involves residue Lys-24. Phosphoserine is present on residues Ser-28 and Ser-71. The segment covering 28-39 has biased composition (low complexity); the sequence is SSTFVTNSSSSS. The tract at residues 28-110 is disordered; it reads SSTFVTNSSS…QPDHRDDENE (83 aa). The PIP-box motif lies at 61-71; that stretch reads QKGIGEFFRLS. Positions 71 to 80 are enriched in basic and acidic residues; sequence SPKESKKENQ. The KEN box signature appears at 77–79; that stretch reads KEN. Positions 84–96 match the Initiation motif motif; sequence EAGTSGLGKAKRK.

Interacts (when monoubiquitinated at Lys-15 and Lys-24) with PCNA. Interacts with isoform 2/p33ING1b of ING1. Interacts with BRCA1. In terms of processing, monoubiquitinated at Lys-15 and Lys-24 during normal S phase, promoting its association with PCNA. Also diubiquitinated at these 2 sites. Following DNA damage, monoubiquitin chains at Lys-15 and Lys-24 are probably extended, leading to disrupt the interaction with PCNA. Polyubiquitinated by the APC/C complex at the mitotic exit, leading to its degradation by the proteasome.

It localises to the nucleus. The protein localises to the cytoplasm. Its subcellular location is the perinuclear region. In terms of biological role, PCNA-binding protein that acts as a regulator of DNA repair during DNA replication. Following DNA damage, the interaction with PCNA is disrupted, facilitating the interaction between monoubiquitinated PCNA and the translesion DNA synthesis DNA polymerase eta (POLH) at stalled replisomes, facilitating the bypass of replication-fork-blocking lesions. Also acts as a regulator of centrosome number. The chain is PCNA-associated factor from Mus musculus (Mouse).